Consider the following 481-residue polypeptide: Eukaryotic translation initiation factor 3 subunit L (481 aa).

A disordered region spans residues 1–22; the sequence is MSVDARTAYPGSRPPANMQDES. The PCI domain occupies 262-457; sequence DAIRTFSHIL…DLDYAIEGNL (196 aa).

This sequence belongs to the eIF-3 subunit L family. In terms of assembly, component of the eukaryotic translation initiation factor 3 (eIF-3) complex.

The protein localises to the cytoplasm. Functionally, component of the eukaryotic translation initiation factor 3 (eIF-3) complex, which is involved in protein synthesis of a specialized repertoire of mRNAs and, together with other initiation factors, stimulates binding of mRNA and methionyl-tRNAi to the 40S ribosome. The eIF-3 complex specifically targets and initiates translation of a subset of mRNAs involved in cell proliferation. This Coccidioides immitis (strain RS) (Valley fever fungus) protein is Eukaryotic translation initiation factor 3 subunit L.